An 804-amino-acid chain; its full sequence is Lon protease 2 (804 aa).

The region spanning 19–216 (VPILPLRNSV…LVLAMVGRQL (198 aa)) is the Lon N-terminal domain. Residue 367–374 (GPPGVGKT) participates in ATP binding. A Lon proteolytic domain is found at 603 to 784 (TLQPGVATGL…EEILPLVLEP (182 aa)). Active-site residues include Ser-690 and Lys-733. The disordered stretch occupies residues 782–804 (LEPPRRAPAQSASPEELEEQAGV).

It belongs to the peptidase S16 family. In terms of assembly, homohexamer. Organized in a ring with a central cavity.

It localises to the cytoplasm. It catalyses the reaction Hydrolysis of proteins in presence of ATP.. Its function is as follows. ATP-dependent serine protease that mediates the selective degradation of mutant and abnormal proteins as well as certain short-lived regulatory proteins. Required for cellular homeostasis and for survival from DNA damage and developmental changes induced by stress. Degrades polypeptides processively to yield small peptide fragments that are 5 to 10 amino acids long. Binds to DNA in a double-stranded, site-specific manner. This Sorangium cellulosum (strain So ce56) (Polyangium cellulosum (strain So ce56)) protein is Lon protease 2.